The following is a 304-amino-acid chain: tRNA pseudouridine synthase B (304 aa).

D47 serves as the catalytic Nucleophile. The disordered stretch occupies residues 85 to 105 (TNTDDGEGEVTETSDARPSDD).

Belongs to the pseudouridine synthase TruB family. Type 1 subfamily.

It catalyses the reaction uridine(55) in tRNA = pseudouridine(55) in tRNA. Functionally, responsible for synthesis of pseudouridine from uracil-55 in the psi GC loop of transfer RNAs. The chain is tRNA pseudouridine synthase B from Dinoroseobacter shibae (strain DSM 16493 / NCIMB 14021 / DFL 12).